We begin with the raw amino-acid sequence, 345 residues long: UDP-3-O-acylglucosamine N-acyltransferase (345 aa).

Catalysis depends on His-248, which acts as the Proton acceptor.

It belongs to the transferase hexapeptide repeat family. LpxD subfamily. As to quaternary structure, homotrimer.

The enzyme catalyses a UDP-3-O-[(3R)-3-hydroxyacyl]-alpha-D-glucosamine + a (3R)-hydroxyacyl-[ACP] = a UDP-2-N,3-O-bis[(3R)-3-hydroxyacyl]-alpha-D-glucosamine + holo-[ACP] + H(+). Its pathway is bacterial outer membrane biogenesis; LPS lipid A biosynthesis. Its function is as follows. Catalyzes the N-acylation of UDP-3-O-acylglucosamine using 3-hydroxyacyl-ACP as the acyl donor. Is involved in the biosynthesis of lipid A, a phosphorylated glycolipid that anchors the lipopolysaccharide to the outer membrane of the cell. The sequence is that of UDP-3-O-acylglucosamine N-acyltransferase from Trichodesmium erythraeum (strain IMS101).